The sequence spans 195 residues: Calcineurin B homologous protein 1 (195 aa).

Residue Gly2 is the site of N-myristoyl glycine attachment. Residues 2-6 carry the Necessary for association with microtubule and interaction with GAPDH motif; the sequence is GSRAS. 4 EF-hand domains span residues 26-61, 71-106, 110-145, and 151-186; these read SQIT…AINP, FSEG…NGPE, SRSN…MVGV, and QLGS…VDVE. Positions 123, 125, 127, 129, and 134 each coordinate Ca(2+). Positions 138-147 match the Nuclear export signal 1 motif; it reads VLRMMVGVNI. 4 residues coordinate Ca(2+): Asp164, Asp166, Asp168, and Glu175. The Nuclear export signal 2 motif lies at 176–185; that stretch reads FVKVLEKVDV.

The protein belongs to the calcineurin regulatory subunit family. CHP subfamily. As to quaternary structure, monomer. Interacts with STK17B; the interaction occurs in a calcium-independent manner and induces the translocation of CHP1 from the Golgi to the nucleus. Interacts with GAPDH; the interaction is direct, occurs in a N-myristoylation-dependent manner and facilitates the ability of CHP1 to bind microtubules. Interacts with KIF1B (via the C-terminal end of the kinesin-motor domain); the interaction occurs in a calcium-dependent manner. Associates (via C-terminal domain) with microtubules; the association occurs with polymerized microtubules during the cell cycle in a myristoylation- and calcium-independent manner and is enhanced by GAPDH. Interacts with PPP3CA. Interacts with SLC9A1/NHE1 (via the cytoplasmic C-terminal domain); the interaction occurs at the plasma membrane in a calcium-dependent manner and at a domain that is critical for growth factor stimulation of the exchanger. Interacts with SLC9A3; increases SLC9A3 trafficking and activity at the plasma membrane. Post-translationally, phosphorylated; decreased phosphorylation is associated with an increase in SLC9A1/NHE1 Na(+)/H(+) exchange activity. Phosphorylation occurs in serum-dependent manner. The phosphorylation state may regulate the binding to SLC9A1/NHE1. In terms of processing, both N-myristoylation and calcium-mediated conformational changes are essential for its function in exocytic traffic. N-myristoylation is required for its association with microtubules and interaction with GAPDH, but not for the constitutive association to membranes.

It is found in the nucleus. The protein localises to the cytoplasm. It localises to the cytoskeleton. Its subcellular location is the endomembrane system. The protein resides in the endoplasmic reticulum-Golgi intermediate compartment. It is found in the endoplasmic reticulum. The protein localises to the cell membrane. It localises to the membrane. Functionally, calcium-binding protein involved in different processes such as regulation of vesicular trafficking, plasma membrane Na(+)/H(+) exchanger and gene transcription. Involved in the constitutive exocytic membrane traffic. Mediates the association between microtubules and membrane-bound organelles of the endoplasmic reticulum and Golgi apparatus and is also required for the targeting and fusion of transcytotic vesicles (TCV) with the plasma membrane. Functions as an integral cofactor in cell pH regulation by controlling plasma membrane-type Na(+)/H(+) exchange activity. Affects the pH sensitivity of SLC9A1/NHE1 by increasing its sensitivity at acidic pH. Required for the stabilization and localization of SLC9A1/NHE1 at the plasma membranes. Inhibits serum- and GTPase-stimulated Na(+)/H(+) exchange. Plays a role as an inhibitor of ribosomal RNA transcription by repressing the nucleolar UBF1 transcriptional activity. May sequester UBF1 in the nucleoplasm and limit its translocation to the nucleolus. Associates to the ribosomal gene promoter. Acts as a negative regulator of the calcineurin/NFAT signaling pathway. Inhibits NFAT nuclear translocation and transcriptional activity by suppressing the calcium-dependent calcineurin phosphatase activity. Also negatively regulates the kinase activity of the apoptosis-induced kinase STK17B. Inhibits both STK17B auto- and substrate-phosphorylations in a calcium-dependent manner. The polypeptide is Calcineurin B homologous protein 1 (Chp1) (Mus musculus (Mouse)).